The following is a 484-amino-acid chain: tRNA sulfurtransferase (484 aa).

One can recognise a THUMP domain in the interval 63-167; that stretch reads EAFADRLSCI…RENLYLVVNR (105 aa). Residues 185–186, Lys-267, Gly-289, and Gln-298 contribute to the ATP site; that span reads LI. Cys-346 and Cys-458 form a disulfide bridge. Residues 406 to 484 enclose the Rhodanese domain; the sequence is VNSNEVIIDV…GYENVKVYRP (79 aa). Cys-458 serves as the catalytic Cysteine persulfide intermediate.

This sequence belongs to the ThiI family.

Its subcellular location is the cytoplasm. It catalyses the reaction [ThiI sulfur-carrier protein]-S-sulfanyl-L-cysteine + a uridine in tRNA + 2 reduced [2Fe-2S]-[ferredoxin] + ATP + H(+) = [ThiI sulfur-carrier protein]-L-cysteine + a 4-thiouridine in tRNA + 2 oxidized [2Fe-2S]-[ferredoxin] + AMP + diphosphate. The catalysed reaction is [ThiS sulfur-carrier protein]-C-terminal Gly-Gly-AMP + S-sulfanyl-L-cysteinyl-[cysteine desulfurase] + AH2 = [ThiS sulfur-carrier protein]-C-terminal-Gly-aminoethanethioate + L-cysteinyl-[cysteine desulfurase] + A + AMP + 2 H(+). The protein operates within cofactor biosynthesis; thiamine diphosphate biosynthesis. Functionally, catalyzes the ATP-dependent transfer of a sulfur to tRNA to produce 4-thiouridine in position 8 of tRNAs, which functions as a near-UV photosensor. Also catalyzes the transfer of sulfur to the sulfur carrier protein ThiS, forming ThiS-thiocarboxylate. This is a step in the synthesis of thiazole, in the thiamine biosynthesis pathway. The sulfur is donated as persulfide by IscS. The sequence is that of tRNA sulfurtransferase from Shewanella sediminis (strain HAW-EB3).